A 113-amino-acid chain; its full sequence is PTS system fructose-like EIIB component 3 (113 aa).

Positions 1-100 constitute a PTS EIIB type-2 domain; it reads MAYLVAVTAC…PQRVMSAVRK (100 aa). Cys10 acts as the Phosphocysteine intermediate in catalysis. Cys10 is modified (phosphocysteine; by EIIA).

It is found in the cytoplasm. The catalysed reaction is D-fructose(out) + N(pros)-phospho-L-histidyl-[protein] = D-fructose 1-phosphate(in) + L-histidyl-[protein]. Functionally, the phosphoenolpyruvate-dependent sugar phosphotransferase system (sugar PTS), a major carbohydrate active transport system, catalyzes the phosphorylation of incoming sugar substrates concomitantly with their translocation across the cell membrane. In Escherichia coli (strain K12), this protein is PTS system fructose-like EIIB component 3 (frwD).